The chain runs to 206 residues: Erythropoietin (206 aa).

The signal sequence occupies residues 1 to 40 (MCEPAPPKPTQSAWHSFPECPALLLLLSLLLLPLGLPVLG). 2 disulfides stabilise this stretch: C47–C201 and C69–C73. N64 carries an N-linked (GlcNAc...) asparagine glycan. 2 N-linked (GlcNAc...) asparagine glycosylation sites follow: N78 and N123.

Belongs to the EPO/TPO family. Produced by kidney or liver of adult mammals and by liver of fetal or neonatal mammals.

The protein localises to the secreted. Its function is as follows. Hormone involved in the regulation of erythrocyte proliferation and differentiation and the maintenance of a physiological level of circulating erythrocyte mass. Binds to EPOR leading to EPOR dimerization and JAK2 activation thereby activating specific downstream effectors, including STAT1 and STAT3. This Canis lupus familiaris (Dog) protein is Erythropoietin (EPO).